The following is a 102-amino-acid chain: Putative nuclear receptor corepressor 1-like protein NCOR1P1 (102 aa).

Over residues 1–18 the composition is skewed to polar residues; it reads MSSSGYPPNQGAFSTEQS. The interval 1-68 is disordered; the sequence is MSSSGYPPNQ…DQNASPSKLS (68 aa). Residues 68-100 adopt a coiled-coil conformation; that stretch reads SKEELIECMDRVDREIAKVEQQILKLKKKQVKV.

Belongs to the N-CoR nuclear receptor corepressors family.

The chain is Putative nuclear receptor corepressor 1-like protein NCOR1P1 (NCOR1P1) from Homo sapiens (Human).